A 319-amino-acid chain; its full sequence is Acetyl esterase (319 aa).

Residues His91 to Gly93 carry the Involved in the stabilization of the negatively charged intermediate by the formation of the oxyanion hole motif. Residues Ser165, Asp262, and His292 contribute to the active site.

The protein belongs to the 'GDXG' lipolytic enzyme family. As to quaternary structure, homodimer. Interacts with MalT and MelA.

The protein localises to the cytoplasm. Displays esterase activity towards short chain fatty esters (acyl chain length of up to 8 carbons). Able to hydrolyze triacetylglycerol (triacetin) and tributyrylglycerol (tributyrin), but not trioleylglycerol (triolein) or cholesterol oleate. Negatively regulates MalT activity by antagonizing maltotriose binding. Inhibits MelA galactosidase activity. This is Acetyl esterase from Escherichia coli O81 (strain ED1a).